The primary structure comprises 410 residues: PHQIYNVTWVITNVQTNTQANATSMLGTLTDAYPTLHVDLCDLVGNTWEPIVPDLRGWASYSSSKYGCKTADRKKQQQTYPFYVCPGHAPSLGPKGTHCGGAQDGFCAAWGCETTGEAWWKPTSSWDYITVKRGSSQDNSCEGKCNPLVLQFTQKGRQASWDGPKMWGLRLYRTGYDPIALFTVSRQVSTITPPQAMGPNLVLPDRKPPSRQSQTGSKVATQRPQTNESAPRSIAPTTMGPKRIGTGDRLINLVQGTYLALNATDPNKTKDCWLCLVSRPPYYEGIAILGNYSNQTNPPPSCLSIPQHKLTISEVSGQGLCIGTVPKTHQALCNETQQGHTGAHYLAAPNGTYWACNTGLTPCISMAVLNWTSDFCVLIELWPRVTYHQPEYVYTHFAKAVRFRREPISL.

Residues P1 to L410 lie on the Extracellular side of the membrane. 2 N-linked (GlcNAc...) asparagine; by host glycosylation sites follow: N6 and N21. 2 disulfides stabilise this stretch: C85–C107 and C99–C112. Positions P193 to K242 are disordered. The span at S210–A230 shows a compositional bias: polar residues. N-linked (GlcNAc...) asparagine; by host glycosylation is found at N227, N262, and N267. The CXXC signature appears at C272–C275. N294, N334, N350, and N370 each carry an N-linked (GlcNAc...) asparagine; by host glycan.

In terms of assembly, the mature envelope protein (Env) consists of a trimer of SU-TM heterodimers attached by a labile interchain disulfide bond. Post-translationally, specific enzymatic cleavages in vivo yield mature proteins. Envelope glycoproteins are synthesized as an inactive precursor that is N-glycosylated and processed likely by host cell furin or by a furin-like protease in the Golgi to yield the mature SU and TM proteins. The cleavage site between SU and TM requires the minimal sequence [KR]-X-[KR]-R.

Its subcellular location is the virion membrane. It localises to the host cell membrane. Its function is as follows. The surface protein (SU) attaches the virus to the host cell by binding to its receptor. This interaction triggers the refolding of the transmembrane protein (TM) and is thought to activate its fusogenic potential by unmasking its fusion peptide. Fusion occurs at the host cell plasma membrane. Functionally, the transmembrane protein (TM) acts as a class I viral fusion protein. Under the current model, the protein has at least 3 conformational states: pre-fusion native state, pre-hairpin intermediate state, and post-fusion hairpin state. During viral and target cell membrane fusion, the coiled coil regions (heptad repeats) assume a trimer-of-hairpins structure, positioning the fusion peptide in close proximity to the C-terminal region of the ectodomain. The formation of this structure appears to drive apposition and subsequent fusion of viral and target cell membranes. Membranes fusion leads to delivery of the nucleocapsid into the cytoplasm. This Feline leukemia virus (strain C/FA27) protein is Envelope glycoprotein (env).